Here is an 84-residue protein sequence, read N- to C-terminus: Small ribosomal subunit protein uS17 (84 aa).

This sequence belongs to the universal ribosomal protein uS17 family. Part of the 30S ribosomal subunit.

In terms of biological role, one of the primary rRNA binding proteins, it binds specifically to the 5'-end of 16S ribosomal RNA. This chain is Small ribosomal subunit protein uS17, found in Glaesserella parasuis serovar 5 (strain SH0165) (Haemophilus parasuis).